Reading from the N-terminus, the 44-residue chain is Viresin (44 aa).

The protein belongs to the insect A10/OS-D protein family.

Its subcellular location is the secreted. In terms of biological role, has antibacterial activity against the Gram-negative bacteria E.coli and E.cloacae, but not against the Gram-negative bacteria P.aeruginosa, P.vulgaris, K.pneumoniae and S.enteritidis or the Gram-positive bacteria S.aureus, S.epidermidis and S.salivarius. This is Viresin from Heliothis virescens (Tobacco budworm moth).